The sequence spans 375 residues: Alpha-2,8-sialyltransferase 8B (375 aa).

Over 1 to 6 (MQLQFR) the chain is Cytoplasmic. The chain crosses the membrane as a helical; Signal-anchor for type II membrane protein span at residues 7–23 (SWMLAALTLLVVFLIFA). The Lumenal segment spans residues 24–375 (DISEIEEEIG…LTVGQCDGAT (352 aa)). Residues asparagine 60, asparagine 72, asparagine 89, and asparagine 134 are each glycosylated (N-linked (GlcNAc...) asparagine). Intrachain disulfides connect cysteine 157/cysteine 307 and cysteine 171/cysteine 371. 2 residues coordinate CMP-N-acetyl-beta-neuraminate: asparagine 162 and asparagine 185. Asparagine 219 and asparagine 234 each carry an N-linked (GlcNAc...) asparagine glycan. Positions 294, 295, 296, 316, 329, and 330 each coordinate CMP-N-acetyl-beta-neuraminate. Histidine 346 serves as the catalytic Proton donor/acceptor.

Belongs to the glycosyltransferase 29 family. In terms of processing, autopolysialylated. Autopolysialylation is not a prerequisite for the polysialylation acitity, but enhances the polysialylation acitity.

The protein resides in the golgi apparatus membrane. Its subcellular location is the secreted. It is found in the cell membrane. It carries out the reaction [N-acetyl-alpha-D-neuraminosyl-(2-&gt;8)](n) + CMP-N-acetyl-beta-neuraminate = [N-acetyl-alpha-D-neuraminosyl-(2-&gt;8)](n+1) + CMP + H(+). Its pathway is protein modification; protein glycosylation. Functionally, catalyzes the transfer of a sialic acid from a CMP-linked sialic acid donor onto a terminal alpha-2,3-, alpha-2,6-, or alpha-2,8-linked sialic acid of an N-linked glycan acceptor through alpha-2,8-linkages. Therefore, participates in polysialic acid synthesis on various sialylated N-acetyllactosaminyl oligosaccharides (alpha-2,3-, alpha-2,6-, or alpha-2,8-linked sialic acid), including NCAM1, NCAM1 N-glycans, FETUB N-glycans, and to a lesser extent sialylparagloboside (SPG) and AHSG, which does not require the initial addition of an alpha 2,8-sialic acid. However, does not exhibit sialic acid-polymerase activity. Catalyzes polysialic acid synthesis in the hippocampal on NCAM1 and supports neurite outgrowth. ST8SIA2-mediated polysialylation influences on oligodendrocyte differentiation and may promote the integrity of myelin and axons. This Pan troglodytes (Chimpanzee) protein is Alpha-2,8-sialyltransferase 8B.